The sequence spans 217 residues: UPF0111 protein MTH_1689 (217 aa).

This sequence belongs to the UPF0111 family.

The chain is UPF0111 protein MTH_1689 from Methanothermobacter thermautotrophicus (strain ATCC 29096 / DSM 1053 / JCM 10044 / NBRC 100330 / Delta H) (Methanobacterium thermoautotrophicum).